The primary structure comprises 214 residues: Large ribosomal subunit protein uL16-like (214 aa).

This sequence belongs to the universal ribosomal protein uL16 family. As to quaternary structure, component of the 60S large ribosomal subunit (LSU).

The protein resides in the cytoplasm. Testis-specific component of the ribosome, which is required for the transition from prophase to metaphase in male meiosis I. Compensates for the inactivated X-linked RPL10 paralog during spermatogenesis. The ribosome is a large ribonucleoprotein complex responsible for the synthesis of proteins in the cell. The small ribosomal subunit (SSU) binds messenger RNAs (mRNAs) and translates the encoded message by selecting cognate aminoacyl-transfer RNA (tRNA) molecules. The large subunit (LSU) contains the ribosomal catalytic site termed the peptidyl transferase center (PTC), which catalyzes the formation of peptide bonds, thereby polymerizing the amino acids delivered by tRNAs into a polypeptide chain. The nascent polypeptides leave the ribosome through a tunnel in the LSU and interact with protein factors that function in enzymatic processing, targeting, and the membrane insertion of nascent chains at the exit of the ribosomal tunnel. In Macaca fascicularis (Crab-eating macaque), this protein is Large ribosomal subunit protein uL16-like (RPL10L).